The primary structure comprises 193 residues: MASPNKKQHTNSDTWLIVGLGNPGDKYANTRHNVGRMVIGELLDRQVPAASLNTHKKTNTDIAEVKIAGRKVVLAQPRTFMNVSGGPVQQLAAFFKIPAENIIVAYDDLEGDPGAVKLRQSGGDKGHNGLKSITKSLGTKDYWRLSCGIGRPPGRMDPAAYVLKPFPKSEAAEVAIMCADAADEVERTLGVGN.

Tyr27 contributes to the tRNA binding site. His32 acts as the Proton acceptor in catalysis. Residues Phe80, Asn82, and Asn128 each coordinate tRNA.

It belongs to the PTH family. In terms of assembly, monomer.

Its subcellular location is the cytoplasm. The enzyme catalyses an N-acyl-L-alpha-aminoacyl-tRNA + H2O = an N-acyl-L-amino acid + a tRNA + H(+). Its function is as follows. Hydrolyzes ribosome-free peptidyl-tRNAs (with 1 or more amino acids incorporated), which drop off the ribosome during protein synthesis, or as a result of ribosome stalling. Catalyzes the release of premature peptidyl moieties from peptidyl-tRNA molecules trapped in stalled 50S ribosomal subunits, and thus maintains levels of free tRNAs and 50S ribosomes. The protein is Peptidyl-tRNA hydrolase 1 of Corynebacterium jeikeium (strain K411).